A 29-amino-acid chain; its full sequence is Cytolysin Uc-1 (29 aa).

Residues 1–15 (DEQTGSKGPNENLPS) are compositionally biased toward polar residues. Residues 1–29 (DEQTGSKGPNENLPSQKDLXAKASXLTEV) are disordered.

It is found in the secreted. It localises to the nematocyst. The protein resides in the target cell membrane. In terms of biological role, pore-forming toxin that lyses bovine erythrocytes at nanomolar concentrations. Is devoid of enzymatic activity. Binds to monolayers and efficiently permeabilizes small lipid vesicles composed of sphingomyelin and cholesterol. The cytolytic activity is not prevented by cholesterol or sphingomyelin. In Urticina crassicornis (Mottled anemone), this protein is Cytolysin Uc-1.